Consider the following 784-residue polypeptide: Ubiquitin carboxyl-terminal hydrolase 1 (784 aa).

Disordered regions lie at residues 1–21 (MPGVIPSESNGLSRGSPSKKN) and 34–56 (KRALDFTDSQENEEKTSEYRGSE). The segment covering 7-16 (SESNGLSRGS) has biased composition (polar residues). Phosphoserine is present on residues S16 and S42. Basic and acidic residues predominate over residues 45–56 (NEEKTSEYRGSE). At S67 the chain carries Phosphoserine. The USP domain maps to 81–784 (VGLNNLGNTC…TPYLLFYKKL (704 aa)). C90 acts as the Nucleophile in catalysis. Basic and acidic residues-rich tracts occupy residues 233–243 (VEEQSLQKEET) and 252–264 (DSMRNTEDVKEQL). Disordered stretches follow at residues 233 to 342 (VEEQ…INWL) and 362 to 414 (TTNQ…KSGN). S474 carries the post-translational modification Phosphoserine. The active-site Proton acceptor is H592. The disordered stretch occupies residues 684–725 (NPDKVVGTPFTDNRNSETNDTTNGTHESDRNKESSDQTGVNM). The segment covering 693–708 (FTDNRNSETNDTTNGT) has biased composition (polar residues). Over residues 709–718 (HESDRNKESS) the composition is skewed to basic and acidic residues. S767 carries the post-translational modification Phosphoserine.

Belongs to the peptidase C19 family. As to quaternary structure, interacts with FANCD2 and PCNA. Interacts with WDR48. Interacts with ATAD5; the interaction regulates USP1-mediated PCNA deubiquitination. Post-translationally, autocatalytic cleavage of USP1 following UV irradiation inactivates it, leading to an increase in ubiquitinated PCNA, recruitment of POLH and translesion synthesis. In terms of processing, ubiquitinated by the CRL2(KLHDC2) complex following autocatalytic cleavage, leading to its degradation: the CRL2(KLHDC2) complex recognizes the diglycine (Gly-Gly) at the C-terminus.

The protein resides in the nucleus. The catalysed reaction is Thiol-dependent hydrolysis of ester, thioester, amide, peptide and isopeptide bonds formed by the C-terminal Gly of ubiquitin (a 76-residue protein attached to proteins as an intracellular targeting signal).. Functionally, negative regulator of DNA damage repair which specifically deubiquitinates monoubiquitinated FANCD2. Also involved in PCNA-mediated translesion synthesis (TLS) by deubiquitinating monoubiquitinated PCNA. Has almost no deubiquitinating activity by itself and requires the interaction with WDR48 to have a high activity. The protein is Ubiquitin carboxyl-terminal hydrolase 1 of Mus musculus (Mouse).